Here is a 486-residue protein sequence, read N- to C-terminus: Glutamyl-tRNA(Gln) amidotransferase subunit A (486 aa).

Residues Lys-76 and Ser-151 each act as charge relay system in the active site. Residue Ser-175 is the Acyl-ester intermediate of the active site.

It belongs to the amidase family. GatA subfamily. As to quaternary structure, heterotrimer of A, B and C subunits.

It carries out the reaction L-glutamyl-tRNA(Gln) + L-glutamine + ATP + H2O = L-glutaminyl-tRNA(Gln) + L-glutamate + ADP + phosphate + H(+). Functionally, allows the formation of correctly charged Gln-tRNA(Gln) through the transamidation of misacylated Glu-tRNA(Gln) in organisms which lack glutaminyl-tRNA synthetase. The reaction takes place in the presence of glutamine and ATP through an activated gamma-phospho-Glu-tRNA(Gln). This chain is Glutamyl-tRNA(Gln) amidotransferase subunit A, found in Chromohalobacter salexigens (strain ATCC BAA-138 / DSM 3043 / CIP 106854 / NCIMB 13768 / 1H11).